We begin with the raw amino-acid sequence, 663 residues long: Syntabulin (663 aa).

Disordered regions lie at residues 1–202 and 216–267; these read MGPL…PREK and VNIH…PEQY. The tract at residues 2-417 is sufficient for interaction with KIF5B; the sequence is GPLRESKKEH…DTMADGLSLE (416 aa). Phosphoserine is present on S50. The span at 57–73 shows a compositional bias: low complexity; it reads FNPSSSGRSARTVSSNS. The segment covering 81–97 has biased composition (polar residues); sequence CPSSQSVSPVKTPSDAG. Residue S107 is modified to Phosphoserine. Composition is skewed to low complexity over residues 145–158, 188–198, and 221–241; these read EADFSSSSSTGSIS, SSHKPGSSPSS, and SYAPSSPSSSNSGSYKGSDCS. Residues 271 to 353 are a coiled coil; sequence LQQKEVTVRH…MRSSLADKDK (83 aa). A sufficient for interaction with STX1A region spans residues 310–417; it reads REDWIEEECH…DTMADGLSLE (108 aa). Phosphoserine occurs at positions 396 and 555. A helical transmembrane segment spans residues 606 to 626; sequence SFLVDLLAVAAPVVPTVLWAF.

In terms of assembly, interacts with STX1A and KIF5B. In terms of tissue distribution, isoform 3, isoform 4 and isoform 5 are expressed in HeLa cell line (at protein level). Isoform 3 is expressed in fetal and adult brain. Isoform 4 is expressed in numerous fetal tissues (brain, kidney, liver, lung, and thymus) and in adult brain, kidney, liver, lung, pancreas, colon, prostate, small intestine, testis and thymus. Isoform 5 is expressed in fetal brain, brain and small intestine.

Its subcellular location is the cytoplasm. The protein resides in the cytoskeleton. It localises to the cytoplasmic vesicle. It is found in the golgi apparatus membrane. Its function is as follows. Part of a kinesin motor-adapter complex that is critical for the anterograde axonal transport of active zone components and contributes to activity-dependent presynaptic assembly during neuronal development. In Homo sapiens (Human), this protein is Syntabulin (SYBU).